We begin with the raw amino-acid sequence, 347 residues long: 4-hydroxy-2-oxovalerate aldolase 1 (347 aa).

The 254-residue stretch at 8 to 261 folds into the Pyruvate carboxyltransferase domain; that stretch reads VTLYDMSLLX…ETGIDLYKIM (254 aa). His-20 functions as the Proton acceptor in the catalytic mechanism. Residues Ser-171 and His-200 each contribute to the substrate site. The Mn(2+) site is built by His-200 and His-202. Tyr-291 contributes to the substrate binding site.

Belongs to the 4-hydroxy-2-oxovalerate aldolase family.

It catalyses the reaction (S)-4-hydroxy-2-oxopentanoate = acetaldehyde + pyruvate. The chain is 4-hydroxy-2-oxovalerate aldolase 1 (salH) from Metapseudomonas furukawaii (Pseudomonas furukawaii).